Consider the following 502-residue polypeptide: ATP synthase subunit alpha (502 aa).

Residues 114–139 (PIDGRGPIETSKTRPIESPAPGVMDR) are disordered. 169–176 (GDRQTGKT) is an ATP binding site.

Belongs to the ATPase alpha/beta chains family. F-type ATPases have 2 components, CF(1) - the catalytic core - and CF(0) - the membrane proton channel. CF(1) has five subunits: alpha(3), beta(3), gamma(1), delta(1), epsilon(1). CF(0) has three main subunits: a(1), b(2) and c(9-12). The alpha and beta chains form an alternating ring which encloses part of the gamma chain. CF(1) is attached to CF(0) by a central stalk formed by the gamma and epsilon chains, while a peripheral stalk is formed by the delta and b chains.

The protein resides in the cell membrane. It catalyses the reaction ATP + H2O + 4 H(+)(in) = ADP + phosphate + 5 H(+)(out). In terms of biological role, produces ATP from ADP in the presence of a proton gradient across the membrane. The alpha chain is a regulatory subunit. This Halalkalibacterium halodurans (strain ATCC BAA-125 / DSM 18197 / FERM 7344 / JCM 9153 / C-125) (Bacillus halodurans) protein is ATP synthase subunit alpha.